The chain runs to 226 residues: Small ribosomal subunit protein uS3 (226 aa).

The region spanning 39–107 is the KH type-2 domain; sequence VRKFLNKELR…PAQINISEVR (69 aa).

The protein belongs to the universal ribosomal protein uS3 family. As to quaternary structure, part of the 30S ribosomal subunit. Forms a tight complex with proteins S10 and S14.

In terms of biological role, binds the lower part of the 30S subunit head. Binds mRNA in the 70S ribosome, positioning it for translation. This Idiomarina loihiensis (strain ATCC BAA-735 / DSM 15497 / L2-TR) protein is Small ribosomal subunit protein uS3.